The chain runs to 248 residues: Opiorphin prepropeptide (248 aa).

The N-terminal stretch at 1 to 21 is a signal peptide; it reads MKLTFFLGLLALISCFTPSES. Q22 is modified (pyrrolidone carboxylic acid). A disordered region spans residues 150-198; that stretch reads DTTITTNPPTTATATTSTSTKPTMTISSSTVPISSTPEPATSISAATPA. The N-linked (GlcNAc...) asparagine glycan is linked to N218.

This sequence belongs to the PROL1/PROL3 family. In terms of tissue distribution, abundantly expressed in lacrimal gland where it found in the secretory endpieces. Also expressed at modest levels in the submandibular gland.

The protein localises to the secreted. Opiorphin is an endogenous inhibitor of neprilysin and aminopeptidase N. Inhibits the breakdown of substance P, Mca-BK2 and Met-enkephalin by neprilysin in vitro with IC(50) values of 29 uM, 33 uM and 33 uM respectively. Inhibits the breakdown of Ala-pNA by aminopeptidase N in vitro with an IC(50) of 65 uM. Has a potent analgesic effect when administered to rats by intravenous injection. The polypeptide is Opiorphin prepropeptide (Homo sapiens (Human)).